A 336-amino-acid polypeptide reads, in one-letter code: Melanoma-associated antigen B17 (336 aa).

Positions 1–17 (MPRGQASKRRAREKRRQ) are enriched in basic residues. Residues 1 to 108 (MPRGQASKRR…SSSESTGRDL (108 aa)) are disordered. 2 stretches are compositionally biased toward low complexity: residues 39–54 (PSSSSPACQSPPQSFP) and 62–80 (SQRASYPSSPASAVSLTSS). Positions 90–103 (ESPNSFHGPSSSES) are enriched in polar residues. Positions 109–336 (LNTKTGELVQ…RARASRSFQP (228 aa)) constitute an MAGE domain.

The sequence is that of Melanoma-associated antigen B17 (MAGEB17) from Homo sapiens (Human).